A 637-amino-acid polypeptide reads, in one-letter code: Neurexin-3-beta (637 aa).

A signal peptide spans 1–35 (MHLRIHARRSPPRRPAWTLGIWFLFWGCIVSSVWS). Residues 36-562 (SSNVASSSST…EVIRESSSTT (527 aa)) lie on the Extracellular side of the membrane. Residues 43 to 52 (SSTSSSPGSH) show a composition bias toward low complexity. The disordered stretch occupies residues 43-65 (SSTSSSPGSHSQHEHHFHGSKHH). Residues 55-65 (HEHHFHGSKHH) are compositionally biased toward basic residues. Residues 85–255 (ATYIFGKSGG…NPNIKINGSV (171 aa)) form the Laminin G-like domain. Asp137 and Ile154 together coordinate Ca(2+). Asn184 is a glycosylation site (N-linked (GlcNAc...) asparagine). Ile206 and Asn208 together coordinate Ca(2+). Residues Asn252 and Asn296 are each glycosylated (N-linked (GlcNAc...) asparagine). The interval 289-310 (ATTTTRKNRSTASIQPTSDDLV) is disordered. Residues 298-310 (STASIQPTSDDLV) are compositionally biased toward polar residues. An O-linked (Xyl...) (heparan sulfate) serine glycan is attached at Ser312. The helical transmembrane segment at 563-583 (GMVVGIVAAAALCILILLYAM) threads the bilayer. Residues 584-637 (YKYRNRDEGSYQVDETRNYISNSAQSNGTLMKEKQQSSKSGHKKQKNKDREYYV) are Cytoplasmic-facing. A disordered region spans residues 605 to 637 (NSAQSNGTLMKEKQQSSKSGHKKQKNKDREYYV).

Belongs to the neurexin family. As to quaternary structure, weakly interacts with CBLN1 and CBLN2. Very weak binding, if any, to CBLN4. Specific isoforms bind neuroligins NLGN1, NLGN2 and NLGN3. Interacts with CLSTN3. In terms of processing, processed by alpha-secretase leading to the formation of an extracellular soluble protein as well as a C-terminal membrane-embedded fragment (CTF). Proteolysis of these CTFs by gamma-secretase releases intracellular domains (ICDs) and extracellular peptides. Post-translationally, O-glycosylated; contains heparan sulfate. Heparan sulfate attachment is required for synapse development by mediating interactions with neuroligins. In terms of tissue distribution, expressed in the blood vessel walls (at protein level).

Its subcellular location is the presynaptic cell membrane. In terms of biological role, neuronal cell surface protein that may be involved in cell recognition and cell adhesion. May mediate intracellular signaling. Functions as part of a trans-synaptic complex by binding to cerebellins and postsynaptic GRID1. This interaction helps regulate the activity of NMDA and AMPA receptors at hippocampal synapses without affecting synapse formation. NRXN3B-CBLN2-GRID1 complex transduce presynaptic signals into postsynaptic AMPAR response. This Homo sapiens (Human) protein is Neurexin-3-beta.